The chain runs to 801 residues: Ferredoxin:CoB-CoM heterodisulfide reductase subunit A (801 aa).

FAD is bound at residue 149–172 (GGGIAGITAALNLADNGVSTVLVE). 2 consecutive 4Fe-4S ferredoxin-type domains span residues 239-269 (KKPR…FNCG) and 285-320 (PKIY…FSQK). Residues Cys248, Cys251, Cys254, Cys258, Cys295, Cys303, Cys306, and Cys310 each coordinate [4Fe-4S] cluster. The tract at residues 382–409 (FSKASSDPTPATCDSRCEDSSDESQGTD) is disordered. 4Fe-4S ferredoxin-type domains are found at residues 606–634 (EIAT…VNES) and 635–664 (GRVV…IAGF). Residues Cys615, Cys618, Cys621, Cys624, Cys644, Cys647, Cys650, and Cys654 each coordinate [4Fe-4S] cluster.

This sequence belongs to the HdrA family. As to quaternary structure, the ferredoxin:CoB-CoM heterodisulfide reductase is composed of three subunits; HdrA1, HdrB1 and HdrC1. It depends on [4Fe-4S] cluster as a cofactor. The cofactor is FAD.

The protein resides in the cytoplasm. The enzyme catalyses coenzyme B + coenzyme M + 2 oxidized [2Fe-2S]-[ferredoxin] = coenzyme M-coenzyme B heterodisulfide + 2 reduced [2Fe-2S]-[ferredoxin] + 2 H(+). The protein operates within cofactor metabolism; coenzyme M-coenzyme B heterodisulfide reduction; coenzyme B and coenzyme M from coenzyme M-coenzyme B heterodisulfide: step 1/1. In terms of biological role, part of a complex that catalyzes the reversible reduction of CoM-S-S-CoB to the thiol-coenzymes H-S-CoM (coenzyme M) and H-S-CoB (coenzyme B). Probably involved in methylotrophic methanogenesis but not in aceticlastic methanogenesis. The polypeptide is Ferredoxin:CoB-CoM heterodisulfide reductase subunit A (Methanosarcina acetivorans (strain ATCC 35395 / DSM 2834 / JCM 12185 / C2A)).